Here is a 195-residue protein sequence, read N- to C-terminus: Meiotically up-regulated gene 84 protein (195 aa).

Over 1–84 (MTLTHHSTFI…IMVKVPTYEY (84 aa)) the chain is Cytoplasmic. A helical transmembrane segment spans residues 85–105 (YGFVMYLVSMLGFGVYIVWAL). Over 106–122 (TPAPVLKFFEIHYYLSR) the chain is Lumenal. A helical membrane pass occupies residues 123–143 (WWALAIPTWLFVLVIYIHVVL). Topologically, residues 144 to 195 (NAYNTEVLTKPFSSLECIVDQYALVGEEDGAAHGRVVDLRLCDVNKQQLEET) are cytoplasmic.

It localises to the endoplasmic reticulum membrane. Functionally, has a role in meiosis. This is Meiotically up-regulated gene 84 protein (mug84) from Schizosaccharomyces pombe (strain 972 / ATCC 24843) (Fission yeast).